The primary structure comprises 215 residues: uncharacterized protein (215 aa).

This is an uncharacterized protein from Methanocaldococcus jannaschii (strain ATCC 43067 / DSM 2661 / JAL-1 / JCM 10045 / NBRC 100440) (Methanococcus jannaschii).